A 264-amino-acid polypeptide reads, in one-letter code: Galectin-3 (264 aa).

The disordered stretch occupies residues 1 to 105 (MADSFSLNDA…GAFPGQPGAP (105 aa)). Position 2 is an N-acetylalanine (Ala2). Ser6 is modified (phosphoserine; by CK1). 8 tandem repeats follow at residues 35-43 (YPGAAYPGA), 44-52 (YPGQAPPGA), 53-61 (YPGQAPPGA), 62-70 (YPGQAPPSA), 71-79 (YPGPTAPGA), 80-88 (YPGPTAPGA), 89-97 (YPGQPAPGA), and 98-107 (FPGQPGAPGA). The segment at 35 to 114 (YPGAAYPGAY…PGAYPQCSGG (80 aa)) is 9 X 9 AA tandem repeats of Y-P-G-X(3)-P-[GS]-A. Positions 37–46 (GAAYPGAYPG) are enriched in low complexity. Residues 47–75 (QAPPGAYPGQAPPGAYPGQAPPSAYPGPT) show a composition bias toward pro residues. A compositionally biased stretch (low complexity) spans 76 to 105 (APGAYPGPTAPGAYPGQPAPGAFPGQPGAP). One copy of the 9; truncated repeat lies at 108 to 114 (YPQCSGG). Positions 132 to 262 (YDLPLPGGVM…DITLTSANHA (131 aa)) constitute a Galectin domain. 195-201 (WGKEERQ) lines the a beta-D-galactoside pocket. Ser202 carries the post-translational modification Phosphoserine. Residues 240–255 (KNLREISQLGISGDIT) carry the Nuclear export signal motif.

In terms of assembly, probably forms homo- or heterodimers. Interacts with DMBT1. Interacts with CD6 and ALCAM. Forms a complex with the ITGA3, ITGB1 and CSPG4. Interacts with LGALS3BP, LYPD3, ZFTRAF1 and UACA. Interacts with TRIM16; this interaction mediates autophagy of damage endomembranes. Interacts with and inhibits by binding NCR3/NKp30. The highest levels are found in activated macrophages.

It is found in the cytoplasm. It localises to the nucleus. Its subcellular location is the secreted. In terms of biological role, galactose-specific lectin which binds IgE. May mediate with the alpha-3, beta-1 integrin the stimulation by CSPG4 of endothelial cells migration. Together with DMBT1, required for terminal differentiation of columnar epithelial cells during early embryogenesis. In the nucleus: acts as a pre-mRNA splicing factor. Involved in acute inflammatory responses including neutrophil activation and adhesion, chemoattraction of monocytes macrophages, opsonization of apoptotic neutrophils, and activation of mast cells. Together with TRIM16, coordinates the recognition of membrane damage with mobilization of the core autophagy regulators ATG16L1 and BECN1 in response to damaged endomembranes. When secreted, interacts with NK cell-activating receptor NCR3/NKp30 acting as an inhibitory ligand which antagonizes NK cell attack. This Mus musculus (Mouse) protein is Galectin-3 (Lgals3).